The sequence spans 380 residues: Cytochrome b (380 aa).

Helical transmembrane passes span 34–54, 78–99, 114–134, and 179–199; these read FGSL…LLAM, WLIR…YLHI, WNTG…GYVL, and FFAL…IHLT. H84 and H98 together coordinate heme b. Heme b is bound by residues H183 and H197. H202 contacts a ubiquinone. Helical transmembrane passes span 227–247, 289–309, 321–341, and 348–368; these read LKDT…ALFS, LGGV…PLLH, LSQL…WVGS, and FIII…ILLP.

The protein belongs to the cytochrome b family. The cytochrome bc1 complex contains 11 subunits: 3 respiratory subunits (MT-CYB, CYC1 and UQCRFS1), 2 core proteins (UQCRC1 and UQCRC2) and 6 low-molecular weight proteins (UQCRH/QCR6, UQCRB/QCR7, UQCRQ/QCR8, UQCR10/QCR9, UQCR11/QCR10 and a cleavage product of UQCRFS1). This cytochrome bc1 complex then forms a dimer. It depends on heme b as a cofactor.

It is found in the mitochondrion inner membrane. Component of the ubiquinol-cytochrome c reductase complex (complex III or cytochrome b-c1 complex) that is part of the mitochondrial respiratory chain. The b-c1 complex mediates electron transfer from ubiquinol to cytochrome c. Contributes to the generation of a proton gradient across the mitochondrial membrane that is then used for ATP synthesis. This chain is Cytochrome b (MT-CYB), found in Fregetta tropica (Black-bellied storm-petrel).